We begin with the raw amino-acid sequence, 371 residues long: Transposase for insertion sequence element IS421 (371 aa).

This sequence belongs to the transposase 11 family.

In terms of biological role, involved in the transposition of the insertion sequence IS421. The polypeptide is Transposase for insertion sequence element IS421 (Escherichia coli).